Consider the following 182-residue polypeptide: Inosine/xanthosine triphosphatase (182 aa).

The protein belongs to the YjjX NTPase family. As to quaternary structure, homodimer. Requires Mg(2+) as cofactor. It depends on Mn(2+) as a cofactor.

It catalyses the reaction XTP + H2O = XDP + phosphate + H(+). The catalysed reaction is ITP + H2O = IDP + phosphate + H(+). Its function is as follows. Phosphatase that hydrolyzes non-canonical purine nucleotides such as XTP and ITP to their respective diphosphate derivatives. Probably excludes non-canonical purines from DNA/RNA precursor pool, thus preventing their incorporation into DNA/RNA and avoiding chromosomal lesions. This Vibrio parahaemolyticus serotype O3:K6 (strain RIMD 2210633) protein is Inosine/xanthosine triphosphatase.